The following is a 203-amino-acid chain: tRNA (pseudouridine(54)-N(1))-methyltransferase (203 aa).

S-adenosyl-L-methionine contacts are provided by Leu-125, Gly-146, and Cys-179.

It belongs to the methyltransferase superfamily. TrmY family. In terms of assembly, homodimer.

It localises to the cytoplasm. The catalysed reaction is pseudouridine(54) in tRNA + S-adenosyl-L-methionine = N(1)-methylpseudouridine(54) in tRNA + S-adenosyl-L-homocysteine + H(+). Functionally, specifically catalyzes the N1-methylation of pseudouridine at position 54 (Psi54) in tRNAs. The sequence is that of tRNA (pseudouridine(54)-N(1))-methyltransferase from Methanopyrus kandleri (strain AV19 / DSM 6324 / JCM 9639 / NBRC 100938).